Consider the following 88-residue polypeptide: Small ribosomal subunit protein bS16c (88 aa).

Belongs to the bacterial ribosomal protein bS16 family.

The protein resides in the plastid. It is found in the chloroplast. This is Small ribosomal subunit protein bS16c from Sinapis alba (White mustard).